The primary structure comprises 205 residues: Protein-L-isoaspartate O-methyltransferase (205 aa).

Residue Ser56 is part of the active site.

This sequence belongs to the methyltransferase superfamily. L-isoaspartyl/D-aspartyl protein methyltransferase family.

It is found in the cytoplasm. The catalysed reaction is [protein]-L-isoaspartate + S-adenosyl-L-methionine = [protein]-L-isoaspartate alpha-methyl ester + S-adenosyl-L-homocysteine. Catalyzes the methyl esterification of L-isoaspartyl residues in peptides and proteins that result from spontaneous decomposition of normal L-aspartyl and L-asparaginyl residues. It plays a role in the repair and/or degradation of damaged proteins. The chain is Protein-L-isoaspartate O-methyltransferase from Aeromonas hydrophila subsp. hydrophila (strain ATCC 7966 / DSM 30187 / BCRC 13018 / CCUG 14551 / JCM 1027 / KCTC 2358 / NCIMB 9240 / NCTC 8049).